The following is a 361-amino-acid chain: Phosphoserine aminotransferase (361 aa).

Arg-42 is a binding site for L-glutamate. Pyridoxal 5'-phosphate-binding positions include 76–77 (GR), Trp-102, Thr-154, Asp-173, and Gln-196. Lys-197 carries the post-translational modification N6-(pyridoxal phosphate)lysine. 238-239 (NT) lines the pyridoxal 5'-phosphate pocket.

This sequence belongs to the class-V pyridoxal-phosphate-dependent aminotransferase family. SerC subfamily. Homodimer. It depends on pyridoxal 5'-phosphate as a cofactor.

It is found in the cytoplasm. The enzyme catalyses O-phospho-L-serine + 2-oxoglutarate = 3-phosphooxypyruvate + L-glutamate. The catalysed reaction is 4-(phosphooxy)-L-threonine + 2-oxoglutarate = (R)-3-hydroxy-2-oxo-4-phosphooxybutanoate + L-glutamate. It functions in the pathway amino-acid biosynthesis; L-serine biosynthesis; L-serine from 3-phospho-D-glycerate: step 2/3. Its pathway is cofactor biosynthesis; pyridoxine 5'-phosphate biosynthesis; pyridoxine 5'-phosphate from D-erythrose 4-phosphate: step 3/5. Functionally, catalyzes the reversible conversion of 3-phosphohydroxypyruvate to phosphoserine and of 3-hydroxy-2-oxo-4-phosphonooxybutanoate to phosphohydroxythreonine. This chain is Phosphoserine aminotransferase, found in Idiomarina loihiensis (strain ATCC BAA-735 / DSM 15497 / L2-TR).